We begin with the raw amino-acid sequence, 581 residues long: Proline--tRNA ligase (581 aa).

The protein belongs to the class-II aminoacyl-tRNA synthetase family. ProS type 1 subfamily. Homodimer.

The protein localises to the cytoplasm. The enzyme catalyses tRNA(Pro) + L-proline + ATP = L-prolyl-tRNA(Pro) + AMP + diphosphate. In terms of biological role, catalyzes the attachment of proline to tRNA(Pro) in a two-step reaction: proline is first activated by ATP to form Pro-AMP and then transferred to the acceptor end of tRNA(Pro). As ProRS can inadvertently accommodate and process non-cognate amino acids such as alanine and cysteine, to avoid such errors it has two additional distinct editing activities against alanine. One activity is designated as 'pretransfer' editing and involves the tRNA(Pro)-independent hydrolysis of activated Ala-AMP. The other activity is designated 'posttransfer' editing and involves deacylation of mischarged Ala-tRNA(Pro). The misacylated Cys-tRNA(Pro) is not edited by ProRS. The polypeptide is Proline--tRNA ligase (Rhodococcus opacus (strain B4)).